The chain runs to 1754 residues: Probable outer membrane protein PmpB (1754 aa).

The N-terminal stretch at 1 to 14 is a signal peptide; sequence MSSMKWLSATAVFA. 2 stretches are compositionally biased toward low complexity: residues 68-105 and 212-232; these read NIPT…TPDP and SETS…PSSS. Disordered stretches follow at residues 68-109, 190-235, 252-271, 397-438, 621-668, and 1299-1332; these read NIPT…KGGG, SSNS…SRAE, PAAQ…GSGG, NADA…ATAK, AAEN…STPS, and TSSA…ATTP. Composition is skewed to polar residues over residues 252 to 264 and 402 to 412; these read PAAQ…STPS and ASSSPQSGSGA. 4 stretches are compositionally biased toward low complexity: residues 413–427, 636–668, 1299–1311, and 1320–1332; these read TTVS…GSDS, PTAD…STPS, TSSA…VSSS, and SAAA…ATTP. The region spanning 1461 to 1754 is the Autotransporter domain; sequence DDIAYNNFWV…MTSCGARMIF (294 aa).

The protein belongs to the PMP outer membrane protein family.

The protein localises to the secreted. Its subcellular location is the cell wall. It localises to the cell outer membrane. In Chlamydia trachomatis serovar D (strain ATCC VR-885 / DSM 19411 / UW-3/Cx), this protein is Probable outer membrane protein PmpB (pmpB).